Consider the following 491-residue polypeptide: Cobyric acid synthase (491 aa).

One can recognise a GATase cobBQ-type domain in the interval 250–437 (QLRVVVPVLP…VHGVFDHPQA (188 aa)). Residue C331 is the Nucleophile of the active site. The active site involves H429.

This sequence belongs to the CobB/CobQ family. CobQ subfamily.

Its pathway is cofactor biosynthesis; adenosylcobalamin biosynthesis. Its function is as follows. Catalyzes amidations at positions B, D, E, and G on adenosylcobyrinic A,C-diamide. NH(2) groups are provided by glutamine, and one molecule of ATP is hydrogenolyzed for each amidation. The chain is Cobyric acid synthase from Xanthomonas axonopodis pv. citri (strain 306).